We begin with the raw amino-acid sequence, 102 residues long: Integration host factor subunit alpha (102 aa).

Belongs to the bacterial histone-like protein family. In terms of assembly, heterodimer of an alpha and a beta chain.

In terms of biological role, this protein is one of the two subunits of integration host factor, a specific DNA-binding protein that functions in genetic recombination as well as in transcriptional and translational control. This chain is Integration host factor subunit alpha, found in Paracoccus denitrificans (strain Pd 1222).